The sequence spans 1106 residues: MYLTKQIPHYSRIHTTQLLTVVNHRTIPFKIRGSFSNCRRYSNFATVPLLERPFKNKSKHNTARASRPFSTQKMLLTKSHPPNMYKDSVFFGYRPIVFSGKQDQKSKVIQCLRTERKTIPDDLVEDEVDRFYNKLGLDDYYFQMEPVSIIADHIEIIYAAKIAAHASHAKEELNIHVKNENEDLAIYLDSSPVTQPELDQSSAVEESISTRYLDPFKLTDPTAYRVESFTSVTNIDRTSTENSNIYTYFVTKCDFVDNPKKDASPDVPTDIASVSDKTFLEKASDNTIEMYQDVMNSVLTRFGPVVRLFDYQGRSEIRLVVGYRRGSIFQYFPSLSKLFRYYGLHSTRTYVEQFSNGVTIISYNFKPELFKNAAVTSINELFSQITREASLLYCLPSTDFQPLFVSEKLSIQEVTYAHCVRIFCEHVMNKLGPEYSSLSAILDHSNNIHAEILETIKRRLSTLAFTRTKIHDTIMQYPGLVHTLFEQFYLEHAINHNSTPHLHRAKSATSLADEASTYSITPMSATALMDLIQKTCTNEEDVSVMEMFVKFNTHLLKTNFFQTTKVALSFRFDPSFLDSTQYKDPLYAMIMSIGNEFRGFHLRFRDVARGGIRLIKSANPEAFGLNARGLFDENYNLAKTQMLKNKDIPEGGAKGVILLGKDCQDKPELAFMKYIDSIIDLLIVNKSQPLVDKLGKPEILFMGPDENTADLVNWATIHAHRRNAPWWKSFFTGKKPTMGGIPHDKYGMTSLSVRCYVEGIYKKLNITDPSKLTKVQTGGPDGDLGSNEIKLSNEKYIAVIDGSGVLYDPAGLDRTELLRLADERKTIDHFDAGKLSPEGYRVLVKDTNLKLPNGEIVRNGTIFRNTAHLRYKADTFVPCGGRPNAININNVEQLIDDHGRPAFKYLVEGANLFITQDAKSVLEKAGVIVIRDASANKGGVTSSSLEVLASLSFDDASFKENMCVHDGKVPTFYADYVNEVKRIIQRNANLEFEAIWKGHSENKIPYTSLSNHLSTEIVKLDHDIYNYEKLWADVGFRNAVLRASIPKTLQAKIGLEKMLERIPESYLRAIFSTYLASRFVYQHVVSSDPFAFFDYISTEMKMLKDA.

Lys-654 is an active-site residue.

Belongs to the Glu/Leu/Phe/Val dehydrogenases family. As to quaternary structure, homotetramer.

Its subcellular location is the cytoplasm. It carries out the reaction L-glutamate + NAD(+) + H2O = 2-oxoglutarate + NH4(+) + NADH + H(+). Functionally, NAD(+)-dependent glutamate dehydrogenase which degrades glutamate to ammonia and alpha-ketoglutarate. This is Probable NAD-specific glutamate dehydrogenase (gdh2) from Schizosaccharomyces pombe (strain 972 / ATCC 24843) (Fission yeast).